Reading from the N-terminus, the 407-residue chain is B3 domain-containing protein Os07g0183200 (407 aa).

The TF-B3 DNA-binding region spans 124–227 (FVKTLMISDF…ELYVGVRRQR (104 aa)).

The protein resides in the nucleus. The chain is B3 domain-containing protein Os07g0183200 from Oryza sativa subsp. japonica (Rice).